We begin with the raw amino-acid sequence, 362 residues long: tRNA-specific 2-thiouridylase MnmA 1 (362 aa).

ATP is bound by residues 29–36 (AMSGGVDS) and methionine 55. Cysteine 109 acts as the Nucleophile in catalysis. A disulfide bridge connects residues cysteine 109 and cysteine 201. Residue glycine 133 coordinates ATP. Positions 151-153 (KDQ) are interaction with tRNA. The active-site Cysteine persulfide intermediate is the cysteine 201.

This sequence belongs to the MnmA/TRMU family.

It localises to the cytoplasm. The catalysed reaction is S-sulfanyl-L-cysteinyl-[protein] + uridine(34) in tRNA + AH2 + ATP = 2-thiouridine(34) in tRNA + L-cysteinyl-[protein] + A + AMP + diphosphate + H(+). Functionally, catalyzes the 2-thiolation of uridine at the wobble position (U34) of tRNA, leading to the formation of s(2)U34. The chain is tRNA-specific 2-thiouridylase MnmA 1 from Fusobacterium nucleatum subsp. nucleatum (strain ATCC 25586 / DSM 15643 / BCRC 10681 / CIP 101130 / JCM 8532 / KCTC 2640 / LMG 13131 / VPI 4355).